The sequence spans 157 residues: Transcription elongation factor GreA (157 aa).

It belongs to the GreA/GreB family.

Necessary for efficient RNA polymerase transcription elongation past template-encoded arresting sites. The arresting sites in DNA have the property of trapping a certain fraction of elongating RNA polymerases that pass through, resulting in locked ternary complexes. Cleavage of the nascent transcript by cleavage factors such as GreA or GreB allows the resumption of elongation from the new 3'terminus. GreA releases sequences of 2 to 3 nucleotides. The polypeptide is Transcription elongation factor GreA (Caulobacter sp. (strain K31)).